Reading from the N-terminus, the 350-residue chain is MDINLFDFHLPEELIAQVPLEDRETSRLMVLDRETGDIEHKHFTDILSYLHEGDCLVLNETKVMPARLHGVKEDTGAHIEVLLLKQEEGDKWETLVKPAKRVKEGTVISFGEGKLKATCTGTADQGGRQLEFSYDGIFYEILDELGEMPLPPYIKETLEDRDRYQTVYAKEIGSAAAPTAGLHFTEELLEKLKQKGVQLAFITLHVGLGTFRPVSADTIEEHHMHAEYYHMSEETAALLNRVKENGGRIITVGTTSTRTLETIATDHDGKLCAASGWTDIFMYPGYEFKAIDGLITNFHLPKSTLIMLVSAFANRDNVLHAYNEAVKEKYRFFSFGDAMFVASHAKMRNK.

Belongs to the QueA family. In terms of assembly, monomer.

It localises to the cytoplasm. The enzyme catalyses 7-aminomethyl-7-carbaguanosine(34) in tRNA + S-adenosyl-L-methionine = epoxyqueuosine(34) in tRNA + adenine + L-methionine + 2 H(+). The protein operates within tRNA modification; tRNA-queuosine biosynthesis. Transfers and isomerizes the ribose moiety from AdoMet to the 7-aminomethyl group of 7-deazaguanine (preQ1-tRNA) to give epoxyqueuosine (oQ-tRNA). The sequence is that of S-adenosylmethionine:tRNA ribosyltransferase-isomerase from Bacillus cereus (strain B4264).